We begin with the raw amino-acid sequence, 56 residues long: Ovomucoid (56 aa).

The Kazal-like domain maps to 6-56 (VDCSEYPKPDCTTEERPLCGSDNKTYGNKCNFCNAVVESNGTLTLSHFGKC). Intrachain disulfides connect C8–C38, C16–C35, and C24–C56. A glycan (N-linked (GlcNAc...) asparagine) is linked at N45.

It localises to the secreted. The chain is Ovomucoid from Francolinus pondicerianus (Grey francolin).